The primary structure comprises 122 residues: Guanine nucleotide exchange factor MSS4 homolog (122 aa).

The MSS4 domain occupies 9–120; it reads EQITDGKNKS…YLALKRVVHK (112 aa). C22, C25, C92, and C95 together coordinate Zn(2+).

It belongs to the DSS4/MSS4 family. As to quaternary structure, interacts with Rab8.

It is found in the basal cell membrane. Functionally, guanine-nucleotide-releasing protein that acts on members of the sec4/ypt1/rab subfamily such as Rab8. During egg development, essential for establishing and maintaining epithelial cell polarity by regulating the correct polarized deposition of basal membrane (BM) proteins such as trol/Pcan and vkg/Coll IV to the basal surface of follicular epithelial (FE) cells. Likely to function by restricting the activity of the vesicle transport regulator Rab8 to the basal membrane, and thus directs BM protein-containing vesicles to the basal side of the FE cells. This function is independent of the Crag/Rab10 regulation of polarized BM protein secretion in the FE. This chain is Guanine nucleotide exchange factor MSS4 homolog, found in Drosophila melanogaster (Fruit fly).